An 848-amino-acid chain; its full sequence is Coiled-coil domain-containing protein 110 (848 aa).

Residues 41 to 62 (SEGVKESGGNEPEYGCASEPEN) form a disordered region. The stretch at 442-794 (LQNYLKESLQ…LSDKVSSQNN (353 aa)) forms a coiled coil. Position 620 is a phosphoserine (S620).

It is found in the nucleus. The polypeptide is Coiled-coil domain-containing protein 110 (Ccdc110) (Mus musculus (Mouse)).